Reading from the N-terminus, the 461-residue chain is Fumarate hydratase class II (461 aa).

Residues 97 to 99, Arg-125, 128 to 131, 138 to 140, and Thr-186 each bind substrate; these read SGT, HPND, and SSN. His-187 (proton donor/acceptor) is an active-site residue. Residue Ser-317 is part of the active site. Substrate is bound by residues Ser-318 and 323-325; that span reads KVN.

This sequence belongs to the class-II fumarase/aspartase family. Fumarase subfamily. In terms of assembly, homotetramer.

It localises to the cytoplasm. The catalysed reaction is (S)-malate = fumarate + H2O. The protein operates within carbohydrate metabolism; tricarboxylic acid cycle; (S)-malate from fumarate: step 1/1. Its function is as follows. Involved in the TCA cycle. Catalyzes the stereospecific interconversion of fumarate to L-malate. In Ralstonia nicotianae (strain ATCC BAA-1114 / GMI1000) (Ralstonia solanacearum), this protein is Fumarate hydratase class II.